The sequence spans 60 residues: Cytotoxin 1 (60 aa).

Cystine bridges form between Cys-3/Cys-21, Cys-14/Cys-38, Cys-42/Cys-53, and Cys-54/Cys-59.

The protein belongs to the three-finger toxin family. Short-chain subfamily. Type IA cytotoxin sub-subfamily. As to quaternary structure, monomer in solution; Homodimer and oligomer in the presence of negatively charged lipids forming a pore with a size ranging between 20 and 30 Angstroms. As to expression, expressed by the venom gland.

The protein localises to the secreted. It localises to the target cell membrane. In terms of biological role, shows cytolytic activity on many different cells by forming pore in lipid membranes. In vivo, increases heart rate or kills the animal by cardiac arrest. In addition, it binds to heparin with high affinity, interacts with Kv channel-interacting protein 1 (KCNIP1) in a calcium-independent manner, and binds to integrin alpha-V/beta-3 (ITGAV/ITGB3) with moderate affinity. This is Cytotoxin 1 from Naja nivea (Cape cobra).